The sequence spans 350 residues: Leucine-rich repeat-containing protein 23 (350 aa).

The span at 1 to 54 (MEDETLEDGPEEEEEDEEEGTAEETNQDVTERDEEEEAEKDEEEDKEEEEEAEK) shows a compositional bias: acidic residues. Positions 1–64 (MEDETLEDGP…EEPPPHMPLS (64 aa)) are disordered. 8 LRR repeats span residues 107–128 (HLRYVDLSQNSLQDLSPLGALT), 129–150 (HLLSLRADHNQLVSVSGLGELP), 151–171 (YLQVASFAQNRIKSLQGFGHP), 172–193 (RLETLNLIGNELRDLEGLECSN), 196–216 (SLHTLELRSNQLLSTAGLNLP), 217–238 (SLRELYLGQNNISRLEGLEALV), 239–260 (NLTTLHLRDNQLESLDGFSEHL), and 262–283 (ALQYLNLRSNMVAKLQEVQKLY). An LRRCT domain is found at 296 to 334 (NPCEEEEGYRMETLIALPQLERLDKDFFEEEEKREAAET). Positions 314 to 344 (QLERLDKDFFEEEEKREAAETKKAREEEMAE) form a coiled coil. The tract at residues 325 to 350 (EEEKREAAETKKAREEEMAEPGEKGN) is disordered.

It is found in the cytoplasm. Its subcellular location is the cytoskeleton. It localises to the flagellum axoneme. The polypeptide is Leucine-rich repeat-containing protein 23 (lrrc23) (Xenopus tropicalis (Western clawed frog)).